The primary structure comprises 367 residues: NADH-quinone oxidoreductase subunit D (367 aa).

It belongs to the complex I 49 kDa subunit family. In terms of assembly, NDH-1 is composed of 14 different subunits. Subunits NuoB, C, D, E, F, and G constitute the peripheral sector of the complex.

It is found in the cell membrane. It catalyses the reaction a quinone + NADH + 5 H(+)(in) = a quinol + NAD(+) + 4 H(+)(out). In terms of biological role, NDH-1 shuttles electrons from NADH, via FMN and iron-sulfur (Fe-S) centers, to quinones in the respiratory chain. The immediate electron acceptor for the enzyme in this species is believed to be ubiquinone. Couples the redox reaction to proton translocation (for every two electrons transferred, four hydrogen ions are translocated across the cytoplasmic membrane), and thus conserves the redox energy in a proton gradient. The chain is NADH-quinone oxidoreductase subunit D from Dehalococcoides mccartyi (strain ATCC BAA-2100 / JCM 16839 / KCTC 5957 / BAV1).